Reading from the N-terminus, the 91-residue chain is MSRTIFCTFLQREADGQDFQLYPGELGKRIYNEISKEAWAQWQHKQTMLINEKKLSMMNPEHRKLLEQEMVQFLFEGKDVHIEGYTPPEKQ.

This sequence belongs to the Fe(2+)-trafficking protein family. As to quaternary structure, monomer.

In terms of biological role, could be a mediator in iron transactions between iron acquisition and iron-requiring processes, such as synthesis and/or repair of Fe-S clusters in biosynthetic enzymes. The protein is Probable Fe(2+)-trafficking protein of Klebsiella pneumoniae subsp. pneumoniae (strain ATCC 700721 / MGH 78578).